The following is an 834-amino-acid chain: Pentatricopeptide repeat-containing protein At4g39530 (834 aa).

PPR repeat units follow at residues 78–112 (DTYL…NLVS), 113–144 (WSTM…KDSP), 145–181 (NEYI…GFDR), 182–212 (DVYV…LPEK), 213–247 (STVT…NVVP), 248–282 (DGYI…GLEM), 283–313 (DASL…MPNK), 314–348 (NIIS…GLKP), 349–383 (DMYA…NLGN), 384–414 (DSYV…FAAA), 415–452 (DVVL…LIRP), 453–487 (SLLT…GLNL), 488–518 (DIFA…MKVK), 519–553 (DLVI…RERP), 554–588 (DEFT…GLEC), 589–619 (NPYI…AASR), 620–654 (DVVC…GIEP), 655–689 (NYIT…GIEP), and 690–720 (ETEH…MPTK). A type E motif region spans residues 725–800 (VWRSLLSGCA…EPGRSWIGIN (76 aa)). Residues 801 to 831 (KEVHIFLSKDKSHCKANQIYEVLDDLLVQIR) form a type E(+) motif region.

It belongs to the PPR family. PCMP-E subfamily.

The protein is Pentatricopeptide repeat-containing protein At4g39530 (PCMP-E52) of Arabidopsis thaliana (Mouse-ear cress).